Here is a 341-residue protein sequence, read N- to C-terminus: Galactofuranose transporter permease protein YtfT (341 aa).

The Cytoplasmic portion of the chain corresponds to 1–25; that stretch reads MMPQSLPDTTTPKRRFRWPTGMPQL. A helical membrane pass occupies residues 26–46; that stretch reads VALLLVLLVDSLVAPHFWQVV. Residues 47–65 are Periplasmic-facing; sequence LQDGRLFGSPIDILNRAAP. A run of 2 helical transmembrane segments spans residues 66–86 and 87–107; these read VALLAIGMTLVIATGGIDLSV and GAVMAIAGATTAAMTVAGFSL. Position 108 (Pro-108) is a topological domain, periplasmic. Residues 109–129 form a helical membrane-spanning segment; sequence IVLLSALGTGILAGLWNGILV. At 130-136 the chain is on the cytoplasmic side; that stretch reads AILKIQP. The chain crosses the membrane as a helical span at residues 137–157; sequence FVATLILMVAGRGVAQLITAG. Residues 158-174 are Periplasmic-facing; sequence QIVTFNSPDLSWFGSGS. The helical transmembrane segment at 175–195 threads the bilayer; the sequence is LLFLPTPVIIAVLTLILFWLL. At 196-223 the chain is on the cytoplasmic side; it reads TRKTALGMFIEAVGINIRAAKNAGVNTR. Residues 224 to 244 form a helical membrane-spanning segment; that stretch reads IIVMLTYVLSGLCAAIAGIIV. Residues 245–255 are Periplasmic-facing; sequence AADIRGADANN. Residues 256–276 traverse the membrane as a helical segment; sequence AGLWLELDAILAVVIGGGSLM. Residues 277–281 lie on the Cytoplasmic side of the membrane; it reads GGRFN. 2 helical membrane-spanning segments follow: residues 282 to 302 and 303 to 323; these read LLLSVVGALIIQGMNTGILLS and GFPPEMNQVVKAVVVLCVLIV. The Cytoplasmic segment spans residues 324–341; sequence QSQRFISLIKGVRSRDKT.

Belongs to the binding-protein-dependent transport system permease family. AraH/RbsC subfamily. In terms of assembly, the complex is composed of two ATP-binding proteins (YtfR), two transmembrane proteins (YtfT and YjfF) and a solute-binding protein (YtfQ).

The protein localises to the cell inner membrane. Functionally, part of the ABC transporter complex YtfQRT-YjfF involved in galactofuranose transport. Probably responsible for the translocation of the substrate across the membrane. The protein is Galactofuranose transporter permease protein YtfT (ytfT) of Escherichia coli (strain K12).